Here is a 790-residue protein sequence, read N- to C-terminus: Kinesin-like protein KIF9 (790 aa).

The region spanning 6–340 (KVQAFVRVRP…LRFASRMKLV (335 aa)) is the Kinesin motor domain. ATP-binding positions include 12-14 (RVR) and 93-100 (GQTGAGKT). The stretch at 342 to 442 (TEPAINEKYD…EQEVESALRR (101 aa)) forms a coiled coil. Residues 482–521 (GVAPFSVKPGKKPKTKKTPKDQFSSSARKEGASSPVSGKD) form a disordered region. Phosphothreonine is present on Thr530. Positions 547-577 (RERETSSIEPLISDSPKEELRAPRPSTPPSR) are disordered. Residues 600-695 (KSILNERKKR…YCQRLVDQCR (96 aa)) adopt a coiled-coil conformation.

This sequence belongs to the TRAFAC class myosin-kinesin ATPase superfamily. Kinesin family. Interacts with HYDIN. In terms of tissue distribution, highly expressed in the testis (at protein level). Weakly expressed in the brain, thymus, lung and heart.

It localises to the cytoplasm. The protein resides in the cytoskeleton. It is found in the cell projection. The protein localises to the cilium. Its subcellular location is the flagellum. It localises to the flagellum axoneme. Essential for normal male fertility and for progressive motility of spermatozoa. The chain is Kinesin-like protein KIF9 (Kif9) from Mus musculus (Mouse).